The primary structure comprises 335 residues: Anthranilate phosphoribosyltransferase (335 aa).

5-phospho-alpha-D-ribose 1-diphosphate-binding positions include Gly-79, 82-83 (GD), Thr-87, 89-92 (NIST), 107-115 (KHGNRSASS), and Ala-119. Gly-79 lines the anthranilate pocket. A Mg(2+)-binding site is contributed by Ser-91. Residue Asn-110 coordinates anthranilate. Anthranilate is bound at residue Arg-165. Mg(2+) is bound by residues Asp-224 and Glu-225.

This sequence belongs to the anthranilate phosphoribosyltransferase family. In terms of assembly, homodimer. The cofactor is Mg(2+).

It catalyses the reaction N-(5-phospho-beta-D-ribosyl)anthranilate + diphosphate = 5-phospho-alpha-D-ribose 1-diphosphate + anthranilate. Its pathway is amino-acid biosynthesis; L-tryptophan biosynthesis; L-tryptophan from chorismate: step 2/5. In terms of biological role, catalyzes the transfer of the phosphoribosyl group of 5-phosphorylribose-1-pyrophosphate (PRPP) to anthranilate to yield N-(5'-phosphoribosyl)-anthranilate (PRA). The sequence is that of Anthranilate phosphoribosyltransferase from Methanobrevibacter smithii (strain ATCC 35061 / DSM 861 / OCM 144 / PS).